We begin with the raw amino-acid sequence, 620 residues long: Ferric/cupric reductase transmembrane component 7 (620 aa).

Residues 1–45 (MIEERDLVLSNGIHCIADIHSELYARLKKESQAATPWVYQKQYGK) lie on the Extracellular side of the membrane. A helical membrane pass occupies residues 46–66 (FVTYFVAVIIFLSLIKKLAFM). The Cytoplasmic portion of the chain corresponds to 67-107 (YYDSSEEFLPEKKNSPTTPSVFLARIMTKLVAFNRYICYRK). The chain crosses the membrane as a helical span at residues 108–128 (FPTLIFSYLGIPTSVGTFLVV). Residues 129–167 (MATTLYTLLYCFVPHPFYRPCAGFGSPPLSVRAGIMAIS) lie on the Extracellular side of the membrane. Positions 161 to 320 (AGIMAISLVP…LAVKGYLRPG (160 aa)) constitute a Ferric oxidoreductase domain. A helical transmembrane segment spans residues 168 to 188 (LVPFVFSLSGKINVIGWLVGL). Over 189–194 (SYEKIN) the chain is Cytoplasmic. Residues 195–215 (IYHQWASILCLFFSWVHVIPF) form a helical membrane-spanning segment. Positions 197 and 211 each coordinate heme. At 216-237 (LRQARHEGGYERMHQRWKASDM) the chain is on the extracellular side. A helical membrane pass occupies residues 238–258 (WRSGVPPILFLNLLWLSSLPI). Residues 259–265 (ARRHFYE) lie on the Cytoplasmic side of the membrane. The helical transmembrane segment at 266–286 (IFLQLHWILAVGFYISLFYHV) threads the bilayer. Positions 271 and 285 each coordinate heme. The Extracellular portion of the chain corresponds to 287–292 (YPELNS). Residues 293 to 313 (HMYLVATIVVWFAQLFYRLAV) form a helical membrane-spanning segment. Residues 314–620 (KGYLRPGRSF…CYLHSESFGY (307 aa)) lie on the Cytoplasmic side of the membrane. The FAD-binding FR-type domain occupies 321–419 (RSFMASTIAN…DGPYGGIERD (99 aa)). Position 369-375 (369-375 (HPFSIFP)) interacts with FAD. 411-414 (GPYG) lines the NADP(+) pocket. Residues 519–543 (SDQSDLAKREKDTEFGQDDTESNST) form a disordered region. A compositionally biased stretch (basic and acidic residues) spans 523–532 (DLAKREKDTE). An NADP(+)-binding site is contributed by 578–579 (CF).

The protein belongs to the ferric reductase (FRE) family. It depends on FAD as a cofactor.

Its subcellular location is the cell membrane. The enzyme catalyses 2 a Fe(II)-siderophore + NADP(+) + H(+) = 2 a Fe(III)-siderophore + NADPH. In terms of biological role, cell surface metalloreductase. May be involved in copper homeostasis. The protein is Ferric/cupric reductase transmembrane component 7 (FRE7) of Saccharomyces cerevisiae (strain ATCC 204508 / S288c) (Baker's yeast).